Here is a 230-residue protein sequence, read N- to C-terminus: Uracil-DNA glycosylase (230 aa).

The Proton acceptor role is filled by Asp-70.

This sequence belongs to the uracil-DNA glycosylase (UDG) superfamily. UNG family.

It is found in the cytoplasm. It catalyses the reaction Hydrolyzes single-stranded DNA or mismatched double-stranded DNA and polynucleotides, releasing free uracil.. Its function is as follows. Excises uracil residues from the DNA which can arise as a result of misincorporation of dUMP residues by DNA polymerase or due to deamination of cytosine. The protein is Uracil-DNA glycosylase of Pseudomonas putida (strain W619).